A 64-amino-acid polypeptide reads, in one-letter code: Beta-defensin 5 (64 aa).

The first 23 residues, 1–23, serve as a signal peptide directing secretion; it reads MKIHYLLFAFLLVLLSPLAGVFS. 3 cysteine pairs are disulfide-bonded: Cys32-Cys60, Cys39-Cys53, and Cys43-Cys61.

It belongs to the beta-defensin family.

The protein resides in the secreted. Functionally, has antibacterial activity. The chain is Beta-defensin 5 (Defb5) from Mus musculus (Mouse).